The following is a 209-amino-acid chain: Nucleoside triphosphate pyrophosphatase (209 aa).

D79 (proton acceptor) is an active-site residue.

Belongs to the Maf family. A divalent metal cation is required as a cofactor.

It is found in the cytoplasm. The catalysed reaction is a ribonucleoside 5'-triphosphate + H2O = a ribonucleoside 5'-phosphate + diphosphate + H(+). It carries out the reaction a 2'-deoxyribonucleoside 5'-triphosphate + H2O = a 2'-deoxyribonucleoside 5'-phosphate + diphosphate + H(+). Nucleoside triphosphate pyrophosphatase. May have a dual role in cell division arrest and in preventing the incorporation of modified nucleotides into cellular nucleic acids. The sequence is that of Nucleoside triphosphate pyrophosphatase from Mycolicibacterium gilvum (strain PYR-GCK) (Mycobacterium gilvum (strain PYR-GCK)).